Here is a 466-residue protein sequence, read N- to C-terminus: Putative chitinase (466 aa).

The N-terminal stretch at Met-1–Gly-17 is a signal peptide. The GH18 domain maps to Phe-20 to Tyr-380. A disulfide bridge links Cys-24 with Cys-49. Glu-141 serves as the catalytic Proton donor. Residues Asn-408–Glu-442 adopt a coiled-coil conformation.

This sequence belongs to the glycosyl hydrolase 18 family. As to expression, prismatic layer of shell (at protein level). Expressed primarily in the mantle with highest level in the mantle edge and lower level in the mantle pallium.

The protein resides in the secreted. It catalyses the reaction Random endo-hydrolysis of N-acetyl-beta-D-glucosaminide (1-&gt;4)-beta-linkages in chitin and chitodextrins.. In Pinctada maxima (Silver-lipped pearl oyster), this protein is Putative chitinase.